The chain runs to 190 residues: NADH-quinone oxidoreductase subunit B (190 aa).

Residues cysteine 67, cysteine 68, cysteine 132, and cysteine 162 each contribute to the [4Fe-4S] cluster site.

The protein belongs to the complex I 20 kDa subunit family. NDH-1 is composed of 14 different subunits. Subunits NuoB, C, D, E, F, and G constitute the peripheral sector of the complex. It depends on [4Fe-4S] cluster as a cofactor.

Its subcellular location is the cell inner membrane. It catalyses the reaction a quinone + NADH + 5 H(+)(in) = a quinol + NAD(+) + 4 H(+)(out). Functionally, NDH-1 shuttles electrons from NADH, via FMN and iron-sulfur (Fe-S) centers, to quinones in the respiratory chain. The immediate electron acceptor for the enzyme in this species is believed to be ubiquinone. Couples the redox reaction to proton translocation (for every two electrons transferred, four hydrogen ions are translocated across the cytoplasmic membrane), and thus conserves the redox energy in a proton gradient. This chain is NADH-quinone oxidoreductase subunit B, found in Anaplasma marginale (strain Florida).